The sequence spans 356 residues: MSLLSDLINLNLSESSEKIIAEYIWVGGSGMDLRSKARTLPGPVSDPAKLPKWNYDGSSTNQAPGQDSEVILYPQAIFKDPFRQGNNILVICDVYTPAGEPLPTNKRHNAAKIFSHPDVAAEVPWYGIEQEYTLLQKDTNWPLGWPIGGFPGPQGPYYCGIGADKAYGRDIVDAHYKACLYAGINISGINGEVMPGQWEFQVGPSVGISAGDEIWAARYILERITEIAGVVVSFDPKPIPGDWNGAGAHTNYSTKSMREDGGYEIIKKAIEKLGLRHKEHIAAYGEGNERRLTGKHETTDINTFSWGVANRGASVRVGRDTEKDGKGYFEDRRPSSNMDPYVVTSMIAETTLLWKP.

Residues 19–99 (IIAEYIWVGG…VICDVYTPAG (81 aa)) form the GS beta-grasp domain. A GS catalytic domain is found at 106-356 (KRHNAAKIFS…IAETTLLWKP (251 aa)).

It belongs to the glutamine synthetase family. In terms of assembly, homooctamer. Found at highest levels in root nodules.

It is found in the cytoplasm. It catalyses the reaction L-glutamate + NH4(+) + ATP = L-glutamine + ADP + phosphate + H(+). In Medicago sativa (Alfalfa), this protein is Glutamine synthetase nodule isozyme (GS1).